Reading from the N-terminus, the 88-residue chain is Small ribosomal subunit protein bS20 (88 aa).

Positions 1–23 are disordered; it reads MANTSSAKKATRKIARRAAINKN.

The protein belongs to the bacterial ribosomal protein bS20 family.

Binds directly to 16S ribosomal RNA. This chain is Small ribosomal subunit protein bS20, found in Mesorhizobium japonicum (strain LMG 29417 / CECT 9101 / MAFF 303099) (Mesorhizobium loti (strain MAFF 303099)).